Reading from the N-terminus, the 128-residue chain is Sulfurtransferase TusD (128 aa).

Cys78 serves as the catalytic Cysteine persulfide intermediate.

This sequence belongs to the DsrE/TusD family. In terms of assembly, heterohexamer, formed by a dimer of trimers. The hexameric TusBCD complex contains 2 copies each of TusB, TusC and TusD. The TusBCD complex interacts with TusE.

Its subcellular location is the cytoplasm. Its function is as follows. Part of a sulfur-relay system required for 2-thiolation of 5-methylaminomethyl-2-thiouridine (mnm(5)s(2)U) at tRNA wobble positions. Accepts sulfur from TusA and transfers it in turn to TusE. This Salmonella dublin (strain CT_02021853) protein is Sulfurtransferase TusD.